The following is a 504-amino-acid chain: MVSIRPDEISSILKQQIANYDKSVSVSNVGTVLQIGDGIARIYGLEKVMAGELVEFEDGTEGIALNLEDDNVGAVLMGEALGVQEGSTVKSTGKIASVPVGQAMLGRVVNPLGQPVDGNGDIATSDSRLIESLAPGIIKRKSVHEPMQTGITSIDAMIPIGRGQRELIIGDRQTGKTAIAIDTIINQKGQDVVCVYVAVGQKSASVAQVVEVLREKGALEYTIVVNASASEAAALQYLAPYTGAAIAEHFMYQGKATLVIYDDLTKQAQAYRQMSLLLRRPPGREAYPGDVFYCHSRLLERAAKLSESMGSGSMTALPIIETQAGDVSAYIPTNVISITDGQIFLSADLFNSGLRPAINVGISVSRVGGAAQTKAIKKIAGTLKLELAQFDELAAFSQFASDLDEATQKQLGRGKRLRELLKQAQFAPLNLAEQVAVVYAGVKGLIDEVPVEQVTQFAGELREYLKTSKPDYIKQVLTEKKLNEEIESVLKESINEVKSSMLAA.

Position 170–177 (170–177 (GDRQTGKT)) interacts with ATP.

It belongs to the ATPase alpha/beta chains family. In terms of assembly, F-type ATPases have 2 components, CF(1) - the catalytic core - and CF(0) - the membrane proton channel. CF(1) has five subunits: alpha(3), beta(3), gamma(1), delta(1), epsilon(1). CF(0) has four main subunits: a, b, b' and c.

The protein resides in the cellular thylakoid membrane. The catalysed reaction is ATP + H2O + 4 H(+)(in) = ADP + phosphate + 5 H(+)(out). Functionally, produces ATP from ADP in the presence of a proton gradient across the membrane. The alpha chain is a regulatory subunit. The chain is ATP synthase subunit alpha from Prochlorococcus marinus (strain MIT 9211).